A 418-amino-acid chain; its full sequence is MIFDKDDFKAYDADLWNAIAKEEERQQNNIELIASENVVSKAVMAAQGSILTNKYAEGYPGRRYYGGTDVVDVVETLAIERAKEIFGAKFANVQPHSGSQANCAAYMSLIEPGDTVMGMDLASGGHLTHGAPVSFSGQTYNFVSYSVDPETELLDFDAILKQAQEVKPKLIVAGASAYSQIIDFSKFREIADAVGAKLMVDMAHIAGLVAAGLHPSPVPYAHITTTTTHKTLRGPRGGLILTNDEELAKKINSAIFPGIQGGPLXHVVAAKAVSFKEVLDPAFKEYAANVIKNSKAMADVFLQDPDFRIISGGTENHLFLVDVTKVVENGKVAQNLLDEVNITLNKNSIPYESLSPFKTSGIRIGAAAITARGFGEEESRKVAELIIKTLKNSENEAVLEEVRSAVKELTDAFLLYED.

Residues Leu-121 and 125-127 (GHL) each bind (6S)-5,6,7,8-tetrahydrofolate. Lys-230 carries the N6-(pyridoxal phosphate)lysine modification. (6S)-5,6,7,8-tetrahydrofolate contacts are provided by residues Glu-246 and 355-357 (SPF).

Belongs to the SHMT family. As to quaternary structure, homodimer. Requires pyridoxal 5'-phosphate as cofactor.

It localises to the cytoplasm. It carries out the reaction (6R)-5,10-methylene-5,6,7,8-tetrahydrofolate + glycine + H2O = (6S)-5,6,7,8-tetrahydrofolate + L-serine. The protein operates within one-carbon metabolism; tetrahydrofolate interconversion. It functions in the pathway amino-acid biosynthesis; glycine biosynthesis; glycine from L-serine: step 1/1. Functionally, catalyzes the reversible interconversion of serine and glycine with tetrahydrofolate (THF) serving as the one-carbon carrier. This reaction serves as the major source of one-carbon groups required for the biosynthesis of purines, thymidylate, methionine, and other important biomolecules. Also exhibits THF-independent aldolase activity toward beta-hydroxyamino acids, producing glycine and aldehydes, via a retro-aldol mechanism. The chain is Serine hydroxymethyltransferase from Streptococcus pneumoniae serotype 19F (strain G54).